A 406-amino-acid chain; its full sequence is Phosphopentomutase (406 aa).

The Mn(2+) site is built by Asp10, Asp305, His310, Asp346, His347, and His358.

This sequence belongs to the phosphopentomutase family. It depends on Mn(2+) as a cofactor.

Its subcellular location is the cytoplasm. The enzyme catalyses 2-deoxy-alpha-D-ribose 1-phosphate = 2-deoxy-D-ribose 5-phosphate. The catalysed reaction is alpha-D-ribose 1-phosphate = D-ribose 5-phosphate. It participates in carbohydrate degradation; 2-deoxy-D-ribose 1-phosphate degradation; D-glyceraldehyde 3-phosphate and acetaldehyde from 2-deoxy-alpha-D-ribose 1-phosphate: step 1/2. Functionally, isomerase that catalyzes the conversion of deoxy-ribose 1-phosphate (dRib-1-P) and ribose 1-phosphate (Rib-1-P) to deoxy-ribose 5-phosphate (dRib-5-P) and ribose 5-phosphate (Rib-5-P), respectively. The polypeptide is Phosphopentomutase (Rhizobium leguminosarum bv. trifolii (strain WSM2304)).